The chain runs to 353 residues: Serine proteinase inhibitor 1 (353 aa).

Belongs to the serpin family. Poxviruses subfamily.

It is found in the host cytoplasm. Functionally, plays a role in mediating viral host range. May act to inhibit a caspase independent form of apoptosis to allow efficient virus replication in infected cells. This is Serine proteinase inhibitor 1 (OPG208) from Vaccinia virus (strain Western Reserve) (VACV).